Consider the following 361-residue polypeptide: UDP-N-acetylglucosamine--N-acetylmuramyl-(pentapeptide) pyrophosphoryl-undecaprenol N-acetylglucosamine transferase (361 aa).

UDP-N-acetyl-alpha-D-glucosamine contacts are provided by residues T11–G13, N120, R161, S188, and Q282.

The protein belongs to the glycosyltransferase 28 family. MurG subfamily.

Its subcellular location is the cell inner membrane. The enzyme catalyses di-trans,octa-cis-undecaprenyl diphospho-N-acetyl-alpha-D-muramoyl-L-alanyl-D-glutamyl-meso-2,6-diaminopimeloyl-D-alanyl-D-alanine + UDP-N-acetyl-alpha-D-glucosamine = di-trans,octa-cis-undecaprenyl diphospho-[N-acetyl-alpha-D-glucosaminyl-(1-&gt;4)]-N-acetyl-alpha-D-muramoyl-L-alanyl-D-glutamyl-meso-2,6-diaminopimeloyl-D-alanyl-D-alanine + UDP + H(+). It participates in cell wall biogenesis; peptidoglycan biosynthesis. Cell wall formation. Catalyzes the transfer of a GlcNAc subunit on undecaprenyl-pyrophosphoryl-MurNAc-pentapeptide (lipid intermediate I) to form undecaprenyl-pyrophosphoryl-MurNAc-(pentapeptide)GlcNAc (lipid intermediate II). The protein is UDP-N-acetylglucosamine--N-acetylmuramyl-(pentapeptide) pyrophosphoryl-undecaprenol N-acetylglucosamine transferase of Prochlorococcus marinus (strain MIT 9303).